Reading from the N-terminus, the 1139-residue chain is Integrin alpha ina-1 (1139 aa).

Positions 1-19 (MRECIISWTLLLCLSCVKS) are cleaved as a signal peptide. Over 20-1084 (FNLDVNAPIY…PTIGDSRPIP (1065 aa)) the chain is Extracellular. One copy of the FG-GAP 1 repeat lies at 21 to 85 (NLDVNAPIYR…CDINTFYNGG (65 aa)). Residues Asn-108 and Asn-136 are each glycosylated (N-linked (GlcNAc...) asparagine). FG-GAP repeat units lie at residues 111 to 171 (RGRT…LQST), 180 to 231 (LPTT…IFDS), 242 to 302 (NGDM…SSSK), 307 to 370 (EDKF…QRKQ), 378 to 438 (HPPK…IEKF), and 448 to 510 (GNDL…MEKR). A glycan (N-linked (GlcNAc...) asparagine) is linked at Asn-313. 4 N-linked (GlcNAc...) asparagine glycosylation sites follow: Asn-580, Asn-788, Asn-851, and Asn-1026. Residues 1085-1106 (WWIYVIAAVIGVLILSLIIICL) traverse the membrane as a helical segment. Residues 1107–1139 (SKCGFFKRNRLDQPSLYTAQLKHEREEWADTGL) are Cytoplasmic-facing.

This sequence belongs to the integrin alpha chain family. As to quaternary structure, heterodimer of an alpha and a beta subunit. Alpha ina-1 associates with beta pat-3. Interacts (via cytoplasmic domain) with src-1 (when phosphorylated at 'Tyr-416').

It localises to the membrane. The protein resides in the cell projection. It is found in the phagocytic cup. The protein localises to the cytoplasmic vesicle. Its subcellular location is the phagosome membrane. Plays a role in cell migration, axon fasciculation, and morphogenesis. During gonad morphogenesis, involved in distal tip cell (DTC)-mediated guidance of gonad elongation, in maintaining their sharp tapering morphology and in their migration. Involved in the anterior-posterior positioning of QR neuroblast descendants by regulating the migratory speed of QR.p. Probably by acting as a receptor for apoptotic cells, plays a role in the clearance of apoptotic cells during mid-embryogenesis. The polypeptide is Integrin alpha ina-1 (ina-1) (Caenorhabditis elegans).